A 95-amino-acid chain; its full sequence is Late cornified envelope protein 7A (95 aa).

This sequence belongs to the LCE family.

Precursors of the cornified envelope of the stratum corneum. The sequence is that of Late cornified envelope protein 7A from Homo sapiens (Human).